A 554-amino-acid polypeptide reads, in one-letter code: CTP synthase (554 aa).

An amidoligase domain region spans residues 1–265; sequence MTPLIFVTGG…DELVIDQFKL (265 aa). S13 contributes to the CTP binding site. S13 lines the UTP pocket. ATP is bound by residues 14-19 and D71; that span reads SLGKGI. Positions 71 and 139 each coordinate Mg(2+). CTP is bound by residues 146–148, 186–191, and K222; these read DIE and KTKPTQ. Residues 186-191 and K222 contribute to the UTP site; that span reads KTKPTQ. Residues 292-545 enclose the Glutamine amidotransferase type-1 domain; that stretch reads TIAVVGKYVD…VRAAREKKAG (254 aa). Residue G353 coordinates L-glutamine. Catalysis depends on C380, which acts as the Nucleophile; for glutamine hydrolysis. Residues 381 to 384, E404, and R471 contribute to the L-glutamine site; that span reads YGMQ. Active-site residues include H518 and E520.

Belongs to the CTP synthase family. In terms of assembly, homotetramer.

It carries out the reaction UTP + L-glutamine + ATP + H2O = CTP + L-glutamate + ADP + phosphate + 2 H(+). It catalyses the reaction L-glutamine + H2O = L-glutamate + NH4(+). The catalysed reaction is UTP + NH4(+) + ATP = CTP + ADP + phosphate + 2 H(+). It participates in pyrimidine metabolism; CTP biosynthesis via de novo pathway; CTP from UDP: step 2/2. Its activity is regulated as follows. Allosterically activated by GTP, when glutamine is the substrate; GTP has no effect on the reaction when ammonia is the substrate. The allosteric effector GTP functions by stabilizing the protein conformation that binds the tetrahedral intermediate(s) formed during glutamine hydrolysis. Inhibited by the product CTP, via allosteric rather than competitive inhibition. Its function is as follows. Catalyzes the ATP-dependent amination of UTP to CTP with either L-glutamine or ammonia as the source of nitrogen. Regulates intracellular CTP levels through interactions with the four ribonucleotide triphosphates. The sequence is that of CTP synthase from Xanthomonas campestris pv. campestris (strain 8004).